The following is a 193-amino-acid chain: Thymidine kinase (193 aa).

ATP is bound by residues 9–16 (STMNAGKS) and 87–90 (DEAQ). Catalysis depends on Glu-88, which acts as the Proton acceptor. The Zn(2+) site is built by Cys-145, Cys-147, Cys-182, and His-185.

This sequence belongs to the thymidine kinase family. In terms of assembly, homotetramer.

It localises to the cytoplasm. The catalysed reaction is thymidine + ATP = dTMP + ADP + H(+). This Haemophilus influenzae (strain ATCC 51907 / DSM 11121 / KW20 / Rd) protein is Thymidine kinase.